The following is a 127-amino-acid chain: Large ribosomal subunit protein bL17 (127 aa).

The protein belongs to the bacterial ribosomal protein bL17 family. In terms of assembly, part of the 50S ribosomal subunit. Contacts protein L32.

This is Large ribosomal subunit protein bL17 from Lactobacillus helveticus (strain DPC 4571).